The chain runs to 228 residues: uncharacterized protein (228 aa).

Residues 1 to 34 (MPRDTKPYSRPANAPRPGVKTERSNQFKAASTKY) form a disordered region.

This is an uncharacterized protein from Orgyia pseudotsugata (Douglas-fir tussock moth).